The primary structure comprises 868 residues: MHEQYTPRDIEAAAQKFWDEQQSFAVTEQPGKDTYYCLSMFPYPSGKLHMGHVRNYTIGDVIARYQRMLGKNVLQPMGWDAFGMPAENAAMKNNVAPAKWTYENIDYMKTQLKSLGLAIDWAREVTTCKPDYYRWEQWLFTRLFEKGIIYRKNGTVNWDPADQTVLANEQVIDGRGWRSGALIEKREIPMYYFRITDYADELLESLDELPGWPEQVKTMQRNWIGKSRGMEVQFPYDQASIGHEGTLKVFTTRPDTLMGATYVAVAAEHPLATQAAQGNPALQAFIDECKSGSVAEADMATQEKKGMATSLLVEHPLTGEKLPVWVANYVLMHYGDGAVMAVPAHDERDFEFAHKYNLPVKAVVRTSAGDEVGSEWQAAYGEHGQLINSAEFDGLDFAGAFDAIEAALIRKELGKSRTQFRLRDWGISRQRYWGCPIPIIHCPSCGDVPVPEDQLPVTLPENVVPDGAGSPLARMPEFYECSCPKCGAAAKRETDTMDTFVESSWYFARYASPNYDKGLVDPKAANHWLPVDQYIGGIEHAILHLLYARFFHKLMRDEGLVTSNEPFKNLLTQGMVVAETYYRVASNGGKDWFNPADVEIERDAKAKIIGARLKTDGLPVEIGGTEKMSKSKNNGVDPQSMIEAYGADTCRLFMMFASPPDMSLEWSDSGVEGASRFLRRVWRLAQAHVSQGLPGKLDVAALDDAQKVIRRAIHAAIKQASTDVGQFHKFNTAIAQVMTVMNVLEKAPQATEQDRALLQEGLEAVTLLLAPITPHISHALWQHLGHAGSVIDAAWPSVDEQALVQDSITLVVQVNGKLRGQVEMPAAASREEVEAAARSNENVLRFIDGLTIRKVIVVPGKLVNIVAN.

Residues 42–52 (PYPSGKLHMGH) carry the 'HIGH' region motif. The 'KMSKS' region signature appears at 627–631 (KMSKS). Lys-630 contributes to the ATP binding site.

This sequence belongs to the class-I aminoacyl-tRNA synthetase family.

The protein localises to the cytoplasm. The enzyme catalyses tRNA(Leu) + L-leucine + ATP = L-leucyl-tRNA(Leu) + AMP + diphosphate. In Pseudomonas putida (strain ATCC 700007 / DSM 6899 / JCM 31910 / BCRC 17059 / LMG 24140 / F1), this protein is Leucine--tRNA ligase.